A 254-amino-acid chain; its full sequence is Putative cysteine-rich repeat secretory protein 37 (254 aa).

An N-terminal signal peptide occupies residues 1-29 (MYSSYSLSKRLVSIPILAIQLLLIRSVSS). 2 Gnk2-homologous domains span residues 36-138 (YLNH…SIRS) and 145-251 (YRNV…LYPF).

It belongs to the cysteine-rich repeat secretory protein family.

It localises to the secreted. The polypeptide is Putative cysteine-rich repeat secretory protein 37 (CRRSP37) (Arabidopsis thaliana (Mouse-ear cress)).